The following is a 283-amino-acid chain: Non-selective voltage-gated ion channel VDAC3 (283 aa).

Position 2 is an N-acetylcysteine (Cys2). The residue at position 4 (Thr4) is a Phosphothreonine. N6-acetyllysine is present on residues Lys12, Lys15, and Lys20. A run of 2 beta stranded transmembrane segments spans residues 26-35 (MVKIDLKTKS) and 39-47 (VEFSTSGHA). Residues Lys53 and Lys61 each participate in a glycyl lysine isopeptide (Lys-Gly) (interchain with G-Cter in ubiquitin) cross-link. 3 beta stranded membrane passes run 54–64 (ASGNLETKYKV), 69–76 (LTFTQKWN), and 80–89 (TLGTEISWEN). Lys90 is modified (N6-acetyllysine). A beta stranded membrane pass occupies residues 95–104 (LKLTLDTIFV). Residues Lys109 and Lys110 each participate in a glycyl lysine isopeptide (Lys-Gly) (interchain with G-Cter in ubiquitin) cross-link. Beta stranded transmembrane passes span 111 to 120 (SGKLKASYKR), 123 to 130 (FSVGSNVD), 137 to 145 (TIYGWAVLA), 150 to 158 (LAGYQMSFD), 163 to 175 (KLSQNNFALGYKA), 178 to 185 (FQLHTHVN), 189 to 198 (EFGGSIYQKV), 202 to 211 (IETSINLAWT), 218 to 227 (RFGIAAKYML), and 231 to 238 (TSLSAKVN). Lys163 participates in a covalent cross-link: Glycyl lysine isopeptide (Lys-Gly) (interchain with G-Cter in ubiquitin). Ser241 carries the phosphoserine modification. NAD(+) contacts are provided by residues 242-244 (LIG) and 260-264 (SALID). The next 2 beta stranded transmembrane spans lie at 242–251 (LIGLGYTQTL) and 254–263 (GVKLTLSALI). Lys266 carries the N6-acetyllysine; alternate modification. Lys266 participates in a covalent cross-link: Glycyl lysine isopeptide (Lys-Gly) (interchain with G-Cter in ubiquitin); alternate. The chain crosses the membrane as a beta stranded span at residues 273–282 (HKVGLGFELE). Lys274 participates in a covalent cross-link: Glycyl lysine isopeptide (Lys-Gly) (interchain with G-Cter in ubiquitin).

The protein belongs to the eukaryotic mitochondrial porin family. Interacts with ARMC12 in a TBC1D21-dependent manner. Interacts with MISFA. Ubiquitinated by PRKN during mitophagy, leading to its degradation and enhancement of mitophagy. Deubiquitinated by USP30. As to expression, expressed in erythrocytes (at protein level). Widely expressed. Highest in testis.

It localises to the mitochondrion outer membrane. The protein resides in the membrane. The enzyme catalyses chloride(in) = chloride(out). The catalysed reaction is K(+)(in) = K(+)(out). Functionally, non-selective voltage-gated ion channel that mediates the transport of anions and cations through the mitochondrion outer membrane and plasma membrane. Forms a high-conducting channel with a stable open state and a voltage-induced closure with a mild preference for anions over cations. Involved in male fertility and sperm mitochondrial sheath formation. The chain is Non-selective voltage-gated ion channel VDAC3 from Homo sapiens (Human).